A 197-amino-acid chain; its full sequence is Chromophore lyase CpcT/CpeT (197 aa).

Belongs to the CpcT/CpeT biliprotein lyase family.

Its function is as follows. Covalently attaches a chromophore to Cys residue(s) of phycobiliproteins. In Synechococcus sp. (strain WH8103), this protein is Chromophore lyase CpcT/CpeT.